The primary structure comprises 160 residues: Cyanate hydratase (160 aa).

Residues Arg-100, Glu-103, and Ser-126 contribute to the active site.

Belongs to the cyanase family.

It catalyses the reaction cyanate + hydrogencarbonate + 3 H(+) = NH4(+) + 2 CO2. In terms of biological role, catalyzes the reaction of cyanate with bicarbonate to produce ammonia and carbon dioxide. This chain is Cyanate hydratase, found in Aspergillus niger (strain ATCC MYA-4892 / CBS 513.88 / FGSC A1513).